The primary structure comprises 741 residues: NAD(P)H-quinone oxidoreductase subunit 5, chloroplastic (741 aa).

The next 16 helical transmembrane spans lie at 9–29 (WVIP…LFLI), 39–59 (IWAF…VQLS), 89–109 (IDPL…LVLI), 125–145 (FIYI…SNLI), 147–167 (IYFF…FWFT), 184–204 (IGDF…GSLE), 216–238 (IPNN…LGAV), 258–278 (TPIS…FLLA), 280–300 (LLPL…VGTI), 327–347 (LGYM…FHLI), 354–374 (ALLF…VGYS), 396–416 (TAFL…CFWS), 425–445 (WLYS…TAFY), 544–564 (LFPL…GIPF), 612–632 (SLVI…YSFF), and 721–741 (ISSY…FFLS).

Belongs to the complex I subunit 5 family. NDH is composed of at least 16 different subunits, 5 of which are encoded in the nucleus.

Its subcellular location is the plastid. The protein localises to the chloroplast thylakoid membrane. The enzyme catalyses a plastoquinone + NADH + (n+1) H(+)(in) = a plastoquinol + NAD(+) + n H(+)(out). The catalysed reaction is a plastoquinone + NADPH + (n+1) H(+)(in) = a plastoquinol + NADP(+) + n H(+)(out). NDH shuttles electrons from NAD(P)H:plastoquinone, via FMN and iron-sulfur (Fe-S) centers, to quinones in the photosynthetic chain and possibly in a chloroplast respiratory chain. The immediate electron acceptor for the enzyme in this species is believed to be plastoquinone. Couples the redox reaction to proton translocation, and thus conserves the redox energy in a proton gradient. The chain is NAD(P)H-quinone oxidoreductase subunit 5, chloroplastic (ndhF) from Brachypodium distachyon (Purple false brome).